Here is a 412-residue protein sequence, read N- to C-terminus: Peptidase T (412 aa).

Position 84 (His-84) interacts with Zn(2+). Residue Asp-86 is part of the active site. Residue Asp-146 coordinates Zn(2+). Glu-179 acts as the Proton acceptor in catalysis. Zn(2+)-binding residues include Glu-180, Asp-202, and His-385.

Belongs to the peptidase M20B family. Requires Zn(2+) as cofactor.

The protein localises to the cytoplasm. The enzyme catalyses Release of the N-terminal residue from a tripeptide.. Functionally, cleaves the N-terminal amino acid of tripeptides. This is Peptidase T from Pasteurella multocida (strain Pm70).